The primary structure comprises 476 residues: Aspartyl/glutamyl-tRNA(Asn/Gln) amidotransferase subunit B (476 aa).

This sequence belongs to the GatB/GatE family. GatB subfamily. In terms of assembly, heterotrimer of A, B and C subunits.

It catalyses the reaction L-glutamyl-tRNA(Gln) + L-glutamine + ATP + H2O = L-glutaminyl-tRNA(Gln) + L-glutamate + ADP + phosphate + H(+). The catalysed reaction is L-aspartyl-tRNA(Asn) + L-glutamine + ATP + H2O = L-asparaginyl-tRNA(Asn) + L-glutamate + ADP + phosphate + 2 H(+). Its function is as follows. Allows the formation of correctly charged Asn-tRNA(Asn) or Gln-tRNA(Gln) through the transamidation of misacylated Asp-tRNA(Asn) or Glu-tRNA(Gln) in organisms which lack either or both of asparaginyl-tRNA or glutaminyl-tRNA synthetases. The reaction takes place in the presence of glutamine and ATP through an activated phospho-Asp-tRNA(Asn) or phospho-Glu-tRNA(Gln). This chain is Aspartyl/glutamyl-tRNA(Asn/Gln) amidotransferase subunit B, found in Laribacter hongkongensis (strain HLHK9).